Here is a 442-residue protein sequence, read N- to C-terminus: tRNA modification GTPase MnmE (442 aa).

Residues R21, E79, and K118 each contribute to the (6S)-5-formyl-5,6,7,8-tetrahydrofolate site. Residues 214–367 (GFKIAIVGKP…LKEELQNYLN (154 aa)) enclose the TrmE-type G domain. A K(+)-binding site is contributed by N224. GTP is bound by residues 224 to 229 (NVGKSS), 243 to 249 (SDIAGTT), and 268 to 271 (DTAG). A Mg(2+)-binding site is contributed by S228. Residues S243, I245, and T248 each coordinate K(+). T249 contacts Mg(2+). K442 is a binding site for (6S)-5-formyl-5,6,7,8-tetrahydrofolate.

Belongs to the TRAFAC class TrmE-Era-EngA-EngB-Septin-like GTPase superfamily. TrmE GTPase family. In terms of assembly, homodimer. Heterotetramer of two MnmE and two MnmG subunits. The cofactor is K(+).

The protein resides in the cytoplasm. In terms of biological role, exhibits a very high intrinsic GTPase hydrolysis rate. Involved in the addition of a carboxymethylaminomethyl (cmnm) group at the wobble position (U34) of certain tRNAs, forming tRNA-cmnm(5)s(2)U34. In Campylobacter jejuni subsp. jejuni serotype O:23/36 (strain 81-176), this protein is tRNA modification GTPase MnmE.